We begin with the raw amino-acid sequence, 566 residues long: Serine/threonine-protein kinase ppk14 (566 aa).

Basic and acidic residues predominate over residues 1–31 (MNELHDGESSEEGRINVEDHLEEAKKDDTGH). Disordered regions lie at residues 1 to 39 (MNEL…GTAK) and 60 to 152 (SRKK…EKLK). A compositionally biased stretch (polar residues) spans 74–85 (AANQSPSGAPES). Positions 119–129 (SFFKSGRKKKD) are enriched in basic residues. Positions 134–145 (RNVSRSNGADTS) are enriched in polar residues. The region spanning 195–485 (FEKVFLLGKG…AADVKLHPFF (291 aa)) is the Protein kinase domain. Residues 201–209 (LGKGDVGRV) and Lys-224 each bind ATP. Asp-320 acts as the Proton acceptor in catalysis. The residue at position 379 (Thr-379) is a Phosphothreonine. At Ser-381 the chain carries Phosphoserine. Residue Thr-385 is modified to Phosphothreonine.

This sequence belongs to the protein kinase superfamily. Ser/Thr protein kinase family. KIN82 subfamily.

The catalysed reaction is L-seryl-[protein] + ATP = O-phospho-L-seryl-[protein] + ADP + H(+). It catalyses the reaction L-threonyl-[protein] + ATP = O-phospho-L-threonyl-[protein] + ADP + H(+). The protein is Serine/threonine-protein kinase ppk14 (ppk14) of Schizosaccharomyces pombe (strain 972 / ATCC 24843) (Fission yeast).